The sequence spans 59 residues: Temperature acclimation protein A (59 aa).

Residues 1–55 enclose the CSD domain; the sequence is FNDEKGFGFITPESGPDLFVHFRAIQGNGFKSLKEGQKVTFIAVQGQKGMQADKV.

It is found in the cytoplasm. Functionally, affects cell viability at low temperatures. The polypeptide is Temperature acclimation protein A (tapA) (Pseudomonas fragi).